We begin with the raw amino-acid sequence, 263 residues long: Leucyl/phenylalanyl-tRNA--protein transferase (263 aa).

The protein belongs to the L/F-transferase family.

The protein resides in the cytoplasm. The enzyme catalyses N-terminal L-lysyl-[protein] + L-leucyl-tRNA(Leu) = N-terminal L-leucyl-L-lysyl-[protein] + tRNA(Leu) + H(+). It carries out the reaction N-terminal L-arginyl-[protein] + L-leucyl-tRNA(Leu) = N-terminal L-leucyl-L-arginyl-[protein] + tRNA(Leu) + H(+). The catalysed reaction is L-phenylalanyl-tRNA(Phe) + an N-terminal L-alpha-aminoacyl-[protein] = an N-terminal L-phenylalanyl-L-alpha-aminoacyl-[protein] + tRNA(Phe). Functions in the N-end rule pathway of protein degradation where it conjugates Leu, Phe and, less efficiently, Met from aminoacyl-tRNAs to the N-termini of proteins containing an N-terminal arginine or lysine. This Novosphingobium aromaticivorans (strain ATCC 700278 / DSM 12444 / CCUG 56034 / CIP 105152 / NBRC 16084 / F199) protein is Leucyl/phenylalanyl-tRNA--protein transferase.